A 589-amino-acid polypeptide reads, in one-letter code: UvrABC system protein C (589 aa).

The 78-residue stretch at 14-91 (HKPGCYLWKD…IAKYKPKYNM (78 aa)) folds into the GIY-YIG domain.

The protein belongs to the UvrC family. In terms of assembly, interacts with UvrB in an incision complex.

It is found in the cytoplasm. Its function is as follows. The UvrABC repair system catalyzes the recognition and processing of DNA lesions. UvrC both incises the 5' and 3' sides of the lesion. The N-terminal half is responsible for the 3' incision and the C-terminal half is responsible for the 5' incision. The protein is UvrABC system protein C of Malacoplasma penetrans (strain HF-2) (Mycoplasma penetrans).